The chain runs to 522 residues: Protein nucleotidyltransferase YdiU (522 aa).

Residues G109, G111, R112, K132, D144, G145, R195, and R202 each coordinate ATP. The active-site Proton acceptor is the D271. Residues N272 and D281 each coordinate Mg(2+). D281 is a binding site for ATP.

Belongs to the SELO family. The cofactor is Mg(2+). Mn(2+) serves as cofactor.

It carries out the reaction L-seryl-[protein] + ATP = 3-O-(5'-adenylyl)-L-seryl-[protein] + diphosphate. It catalyses the reaction L-threonyl-[protein] + ATP = 3-O-(5'-adenylyl)-L-threonyl-[protein] + diphosphate. The catalysed reaction is L-tyrosyl-[protein] + ATP = O-(5'-adenylyl)-L-tyrosyl-[protein] + diphosphate. The enzyme catalyses L-histidyl-[protein] + UTP = N(tele)-(5'-uridylyl)-L-histidyl-[protein] + diphosphate. It carries out the reaction L-seryl-[protein] + UTP = O-(5'-uridylyl)-L-seryl-[protein] + diphosphate. It catalyses the reaction L-tyrosyl-[protein] + UTP = O-(5'-uridylyl)-L-tyrosyl-[protein] + diphosphate. In terms of biological role, nucleotidyltransferase involved in the post-translational modification of proteins. It can catalyze the addition of adenosine monophosphate (AMP) or uridine monophosphate (UMP) to a protein, resulting in modifications known as AMPylation and UMPylation. The polypeptide is Protein nucleotidyltransferase YdiU (Burkholderia cenocepacia (strain HI2424)).